Here is a 362-residue protein sequence, read N- to C-terminus: UDP-N-acetylglucosamine--N-acetylmuramyl-(pentapeptide) pyrophosphoryl-undecaprenol N-acetylglucosamine transferase (362 aa).

UDP-N-acetyl-alpha-D-glucosamine-binding residues include Arg-166, Ser-196, and Gln-290.

The protein belongs to the glycosyltransferase 28 family. MurG subfamily.

The protein resides in the cell membrane. It catalyses the reaction Mur2Ac(oyl-L-Ala-gamma-D-Glu-L-Lys-D-Ala-D-Ala)-di-trans,octa-cis-undecaprenyl diphosphate + UDP-N-acetyl-alpha-D-glucosamine = beta-D-GlcNAc-(1-&gt;4)-Mur2Ac(oyl-L-Ala-gamma-D-Glu-L-Lys-D-Ala-D-Ala)-di-trans,octa-cis-undecaprenyl diphosphate + UDP + H(+). Its pathway is cell wall biogenesis; peptidoglycan biosynthesis. In terms of biological role, cell wall formation. Catalyzes the transfer of a GlcNAc subunit on undecaprenyl-pyrophosphoryl-MurNAc-pentapeptide (lipid intermediate I) to form undecaprenyl-pyrophosphoryl-MurNAc-(pentapeptide)GlcNAc (lipid intermediate II). The protein is UDP-N-acetylglucosamine--N-acetylmuramyl-(pentapeptide) pyrophosphoryl-undecaprenol N-acetylglucosamine transferase of Staphylococcus carnosus (strain TM300).